The primary structure comprises 531 residues: Transactivator/viroplasmin protein (531 aa).

Disordered stretches follow at residues 80–101 (ASGK…TATG) and 505–531 (CKSE…SVLV). Polar residues-rich tracts occupy residues 91-100 (SATSPEQTAT) and 505-517 (CKSE…TSEE). The segment covering 518 to 531 (GLQESEDEDFSVLV) has biased composition (acidic residues).

This sequence belongs to the caulimoviridae viroplasmin family.

It is found in the host cytoplasm. Enhances the translation of downstream ORFs on polycistronic mRNAs. The sequence is that of Transactivator/viroplasmin protein from Cestrum yellow leaf curling virus (CmYLCV).